The following is a 172-amino-acid chain: Large ribosomal subunit protein uL10 (172 aa).

Belongs to the universal ribosomal protein uL10 family. Part of the ribosomal stalk of the 50S ribosomal subunit. The N-terminus interacts with L11 and the large rRNA to form the base of the stalk. The C-terminus forms an elongated spine to which L12 dimers bind in a sequential fashion forming a multimeric L10(L12)X complex.

Forms part of the ribosomal stalk, playing a central role in the interaction of the ribosome with GTP-bound translation factors. This Bradyrhizobium sp. (strain ORS 278) protein is Large ribosomal subunit protein uL10.